Consider the following 345-residue polypeptide: Phosphoribosylformylglycinamidine cyclo-ligase (345 aa).

It belongs to the AIR synthase family.

The protein localises to the cytoplasm. It carries out the reaction 2-formamido-N(1)-(5-O-phospho-beta-D-ribosyl)acetamidine + ATP = 5-amino-1-(5-phospho-beta-D-ribosyl)imidazole + ADP + phosphate + H(+). The protein operates within purine metabolism; IMP biosynthesis via de novo pathway; 5-amino-1-(5-phospho-D-ribosyl)imidazole from N(2)-formyl-N(1)-(5-phospho-D-ribosyl)glycinamide: step 2/2. The chain is Phosphoribosylformylglycinamidine cyclo-ligase from Pasteurella multocida (strain Pm70).